A 365-amino-acid chain; its full sequence is Cobalt-precorrin-5B C(1)-methyltransferase (365 aa).

The protein belongs to the CbiD family.

The enzyme catalyses Co-precorrin-5B + S-adenosyl-L-methionine = Co-precorrin-6A + S-adenosyl-L-homocysteine. It participates in cofactor biosynthesis; adenosylcobalamin biosynthesis; cob(II)yrinate a,c-diamide from sirohydrochlorin (anaerobic route): step 6/10. Functionally, catalyzes the methylation of C-1 in cobalt-precorrin-5B to form cobalt-precorrin-6A. The sequence is that of Cobalt-precorrin-5B C(1)-methyltransferase from Paraburkholderia phytofirmans (strain DSM 17436 / LMG 22146 / PsJN) (Burkholderia phytofirmans).